The primary structure comprises 386 residues: MFEFLHQMSAPKLSTSILRYIFRYAQFIGVIFFCLHTRKDDKTVFIRNWLKWLNVTHRIITFTRFFWVYIASISIKTNRVLQVLHGMRLVLSIPNVAVILCYHIFRGPEIIDLINQFLRLFRQVSDLFKTKTPGFGGRRELILILLNLISFAHEQTYLWFTIRKGFSWRFLIDWWCDFYLVSATNIFIHINSIGYLSLGVLYSELNKYVYTNLRIQLQKLNTSGSKQKIRRVQNRLEKCISLYREIYHTSIMFHKLFVPLLFLALIYKVLLIALIGFNVAVEFYLNSFIFWILLGKHVLDLFLVTVSVEGAVNQFLNIGMQFGNVGDLSKFQTTLDTLFLHLRLGHFRVSILGLFDVTQMQYLQFLSALLSGLAFIAQYRMQVGNG.

Over 1-14 (MFEFLHQMSAPKLS) the chain is Cytoplasmic. Residues 15-35 (TSILRYIFRYAQFIGVIFFCL) traverse the membrane as a helical segment. Residues 36 to 79 (HTRKDDKTVFIRNWLKWLNVTHRIITFTRFFWVYIASISIKTNR) lie on the Extracellular side of the membrane. N-linked (GlcNAc...) asparagine glycosylation occurs at Asn-54. Residues 80–100 (VLQVLHGMRLVLSIPNVAVIL) traverse the membrane as a helical segment. Topologically, residues 101–141 (CYHIFRGPEIIDLINQFLRLFRQVSDLFKTKTPGFGGRREL) are cytoplasmic. The chain crosses the membrane as a helical span at residues 142–162 (ILILLNLISFAHEQTYLWFTI). At 163–169 (RKGFSWR) the chain is on the extracellular side. Residues 170–190 (FLIDWWCDFYLVSATNIFIHI) form a helical membrane-spanning segment. At 191 to 256 (NSIGYLSLGV…YHTSIMFHKL (66 aa)) the chain is on the cytoplasmic side. The chain crosses the membrane as a helical span at residues 257–277 (FVPLLFLALIYKVLLIALIGF). At 278 to 287 (NVAVEFYLNS) the chain is on the extracellular side. A helical membrane pass occupies residues 288–308 (FIFWILLGKHVLDLFLVTVSV). The Cytoplasmic segment spans residues 309-356 (EGAVNQFLNIGMQFGNVGDLSKFQTTLDTLFLHLRLGHFRVSILGLFD). Residues 357-377 (VTQMQYLQFLSALLSGLAFIA) traverse the membrane as a helical segment. The Extracellular portion of the chain corresponds to 378–386 (QYRMQVGNG).

It belongs to the insect chemoreceptor superfamily. Gustatory receptor (GR) family. Gr93a subfamily.

Its subcellular location is the cell membrane. In terms of biological role, probable gustatory receptor which mediates acceptance or avoidance behavior, depending on its substrates. This chain is Putative gustatory receptor 92a (Gr92a), found in Drosophila melanogaster (Fruit fly).